The sequence spans 433 residues: Protein disulfide-isomerase A6 homolog (433 aa).

The N-terminal stretch at 1-19 (MRQLASILLLAFVVGSVSA) is a signal peptide. Thioredoxin domains follow at residues 20–119 (FYSP…GQRT) and 120–267 (AKAI…KHVA). Residues C55, C58, C186, and C189 each act as nucleophile in the active site. Cystine bridges form between C55-C58 and C186-C189. Residue N279 is glycosylated (N-linked (GlcNAc...) asparagine). The tract at residues 405–433 (VDPWDGKDGQLPTEEDIDLSDIDLDKDEL) is disordered. Positions 417–433 (TEEDIDLSDIDLDKDEL) are enriched in acidic residues. The Prevents secretion from ER signature appears at 430–433 (KDEL).

It belongs to the protein disulfide isomerase family. In terms of assembly, interacts with Drpr (via extracellular region). In terms of tissue distribution, in the blastoderm embryo, expression starts at the anterior and posterior poles and later appears as broad stripes. Following gastrulation, expressed in midline precursor cells and the posterior head with low levels present throughout the embryo. During germ band extension, weak dorsoventral stripes of expression are evident. Midline expression begins and is retained throughout embryogenesis in clusters of cells in each segment in the central nervous system. At least some of the midline expression occurs in VUM neurons.

The protein localises to the endoplasmic reticulum lumen. It localises to the cell surface. The enzyme catalyses Catalyzes the rearrangement of -S-S- bonds in proteins.. Binds to both apoptotic cells and phagocytes and promotes Drpr-dependent phagocytosis of apoptotic cells. The sequence is that of Protein disulfide-isomerase A6 homolog from Drosophila melanogaster (Fruit fly).